The following is a 358-amino-acid chain: L-Ala-D/L-Glu epimerase (358 aa).

Substrate-binding residues include Arg-24, Thr-135, and Lys-160. The active-site Proton acceptor; specific for (R)-substrate epimerization is Lys-162. 3 residues coordinate Mg(2+): Asp-190, Glu-218, and Asp-243. The Proton acceptor; specific for (S)-substrate epimerization role is filled by Lys-267. Substrate is bound by residues Cys-295, Asp-320, and Asp-322.

This sequence belongs to the mandelate racemase/muconate lactonizing enzyme family. Mg(2+) is required as a cofactor.

The enzyme catalyses L-alanyl-L-glutamate = L-alanyl-D-glutamate. The protein operates within cell wall degradation; peptidoglycan degradation. Catalyzes the epimerization of L-Ala-D-Glu to L-Ala-L-Glu and has probably a role in the metabolism of the murein peptide, of which L-Ala-D-Glu is a component. Is also able to catalyze the epimerization of L-Ala-D-Asp. This is L-Ala-D/L-Glu epimerase from Clostridium acetobutylicum (strain ATCC 824 / DSM 792 / JCM 1419 / IAM 19013 / LMG 5710 / NBRC 13948 / NRRL B-527 / VKM B-1787 / 2291 / W).